Consider the following 215-residue polypeptide: 3-isopropylmalate dehydratase small subunit (215 aa).

Belongs to the LeuD family. LeuD type 1 subfamily. Heterodimer of LeuC and LeuD.

It carries out the reaction (2R,3S)-3-isopropylmalate = (2S)-2-isopropylmalate. The protein operates within amino-acid biosynthesis; L-leucine biosynthesis; L-leucine from 3-methyl-2-oxobutanoate: step 2/4. Catalyzes the isomerization between 2-isopropylmalate and 3-isopropylmalate, via the formation of 2-isopropylmaleate. This is 3-isopropylmalate dehydratase small subunit from Saccharophagus degradans (strain 2-40 / ATCC 43961 / DSM 17024).